A 171-amino-acid polypeptide reads, in one-letter code: Small ribosomal subunit protein uS4 (171 aa).

One can recognise an S4 RNA-binding domain in the interval 101–165; sequence RRLQTVVYRK…SSLSDELHPE (65 aa). Residues 148–171 are disordered; the sequence is SSVGFDEHSSLSDELHPERAEAQE. Basic and acidic residues predominate over residues 152–171; the sequence is FDEHSSLSDELHPERAEAQE.

It belongs to the universal ribosomal protein uS4 family. As to quaternary structure, part of the 30S ribosomal subunit. Contacts protein S5. The interaction surface between S4 and S5 is involved in control of translational fidelity.

One of the primary rRNA binding proteins, it binds directly to 16S rRNA where it nucleates assembly of the body of the 30S subunit. Its function is as follows. With S5 and S12 plays an important role in translational accuracy. The polypeptide is Small ribosomal subunit protein uS4 (Haloarcula marismortui (strain ATCC 43049 / DSM 3752 / JCM 8966 / VKM B-1809) (Halobacterium marismortui)).